The primary structure comprises 420 residues: UDP-N-acetylglucosamine 1-carboxyvinyltransferase (420 aa).

Residue 22-23 (KN) coordinates phosphoenolpyruvate. Arginine 93 lines the UDP-N-acetyl-alpha-D-glucosamine pocket. Cysteine 117 functions as the Proton donor in the catalytic mechanism. Cysteine 117 is modified (2-(S-cysteinyl)pyruvic acid O-phosphothioketal). Residues aspartate 307 and isoleucine 329 each coordinate UDP-N-acetyl-alpha-D-glucosamine.

Belongs to the EPSP synthase family. MurA subfamily.

It is found in the cytoplasm. The catalysed reaction is phosphoenolpyruvate + UDP-N-acetyl-alpha-D-glucosamine = UDP-N-acetyl-3-O-(1-carboxyvinyl)-alpha-D-glucosamine + phosphate. It participates in cell wall biogenesis; peptidoglycan biosynthesis. In terms of biological role, cell wall formation. Adds enolpyruvyl to UDP-N-acetylglucosamine. This Shewanella pealeana (strain ATCC 700345 / ANG-SQ1) protein is UDP-N-acetylglucosamine 1-carboxyvinyltransferase.